The primary structure comprises 282 residues: Elongation factor Ts (282 aa).

Residues Thr-80 to Val-83 form an involved in Mg(2+) ion dislocation from EF-Tu region.

The protein belongs to the EF-Ts family.

It localises to the cytoplasm. In terms of biological role, associates with the EF-Tu.GDP complex and induces the exchange of GDP to GTP. It remains bound to the aminoacyl-tRNA.EF-Tu.GTP complex up to the GTP hydrolysis stage on the ribosome. The sequence is that of Elongation factor Ts (tsf) from Chlamydia trachomatis serovar D (strain ATCC VR-885 / DSM 19411 / UW-3/Cx).